The following is a 301-amino-acid chain: Phosducin-like protein (301 aa).

The residue at position 2 (T2) is an N-acetylthreonine. Residues 18 to 57 are disordered; that stretch reads SSSEDEDSDHEDKDRGRCAPASSSVPAEAELAGEGISVNT. 2 positions are modified to phosphoserine: S20 and S25. A compositionally biased stretch (low complexity) spans 36–49; it reads APASSSVPAEAELA. The Phosducin domain occupies 36 to 299; that stretch reads APASSSVPAE…TCHSEDSDLE (264 aa). S226, S293, and S296 each carry phosphoserine.

The protein belongs to the phosducin family. In terms of assembly, forms a complex with the beta and gamma subunits of the GTP-binding protein, transducin. Interacts with the CCT chaperonin complex.

The protein localises to the cell projection. It localises to the cilium. Functionally, acts as a positive regulator of hedgehog signaling and regulates ciliary function. Its function is as follows. Functions as a co-chaperone for CCT in the assembly of heterotrimeric G protein complexes, facilitates the assembly of both Gbeta-Ggamma and RGS-Gbeta5 heterodimers. Acts as a negative regulator of heterotrimeric G proteins assembly by trapping the preloaded G beta subunits inside the CCT chaperonin. The protein is Phosducin-like protein (PDCL) of Homo sapiens (Human).